Consider the following 381-residue polypeptide: Erythronate-4-phosphate dehydrogenase (381 aa).

Substrate contacts are provided by Ser-45 and Thr-66. Residues Asp-146, Thr-174, 205–207 (ASR), and Asp-231 each bind NAD(+). Residue Arg-207 is part of the active site. Residue Glu-236 is part of the active site. His-253 acts as the Proton donor in catalysis. Gly-256 provides a ligand contact to NAD(+). Tyr-257 contacts substrate.

Belongs to the D-isomer specific 2-hydroxyacid dehydrogenase family. PdxB subfamily. Homodimer.

It localises to the cytoplasm. It catalyses the reaction 4-phospho-D-erythronate + NAD(+) = (R)-3-hydroxy-2-oxo-4-phosphooxybutanoate + NADH + H(+). It functions in the pathway cofactor biosynthesis; pyridoxine 5'-phosphate biosynthesis; pyridoxine 5'-phosphate from D-erythrose 4-phosphate: step 2/5. Catalyzes the oxidation of erythronate-4-phosphate to 3-hydroxy-2-oxo-4-phosphonooxybutanoate. This Stutzerimonas stutzeri (strain A1501) (Pseudomonas stutzeri) protein is Erythronate-4-phosphate dehydrogenase.